The sequence spans 195 residues: Pyridoxal 5'-phosphate synthase subunit PdxT (195 aa).

46–48 serves as a coordination point for L-glutamine; the sequence is GES. The Nucleophile role is filled by Cys78. L-glutamine contacts are provided by residues Arg105 and 133–134; that span reads IR. Catalysis depends on charge relay system residues His169 and Glu171.

The protein belongs to the glutaminase PdxT/SNO family. As to quaternary structure, in the presence of PdxS, forms a dodecamer of heterodimers. Only shows activity in the heterodimer.

The catalysed reaction is aldehydo-D-ribose 5-phosphate + D-glyceraldehyde 3-phosphate + L-glutamine = pyridoxal 5'-phosphate + L-glutamate + phosphate + 3 H2O + H(+). It carries out the reaction L-glutamine + H2O = L-glutamate + NH4(+). It functions in the pathway cofactor biosynthesis; pyridoxal 5'-phosphate biosynthesis. Its function is as follows. Catalyzes the hydrolysis of glutamine to glutamate and ammonia as part of the biosynthesis of pyridoxal 5'-phosphate. The resulting ammonia molecule is channeled to the active site of PdxS. This Geobacillus thermodenitrificans (strain NG80-2) protein is Pyridoxal 5'-phosphate synthase subunit PdxT.